The primary structure comprises 800 residues: DNA topoisomerase 4 subunit A (800 aa).

In terms of domain architecture, Topo IIA-type catalytic spans 31–495 (LPDVRDGLKP…EIEEIKIDKE (465 aa)). The active-site O-(5'-phospho-DNA)-tyrosine intermediate is the tyrosine 119.

This sequence belongs to the type II topoisomerase GyrA/ParC subunit family. ParC type 2 subfamily. Heterotetramer composed of ParC and ParE.

The protein localises to the cell membrane. It catalyses the reaction ATP-dependent breakage, passage and rejoining of double-stranded DNA.. Its function is as follows. Topoisomerase IV is essential for chromosome segregation. It relaxes supercoiled DNA. Performs the decatenation events required during the replication of a circular DNA molecule. The polypeptide is DNA topoisomerase 4 subunit A (Staphylococcus aureus (strain N315)).